The sequence spans 659 residues: ATP-binding cassette sub-family D member 3 (659 aa).

The segment at 1-61 (MAAFSKYLTA…GKKERAVVDK (61 aa)) is interaction with PEX19. Asn12 carries an N-linked (GlcNAc...) asparagine glycan. Residue Lys61 is modified to N6-acetyllysine. A helical transmembrane segment spans residues 84–104 (GYLVLIAVMLVSRTYCDVWMI). The ABC transmembrane type-1 domain maps to 85 to 372 (YLVLIAVMLV…MLLRMSQALG (288 aa)). N-linked (GlcNAc...) asparagine glycosylation occurs at Asn106. The helical transmembrane segment at 126–146 (LLNFIAAMPLISLVNNFLKYG) threads the bilayer. Asn206 is a glycosylation site (N-linked (GlcNAc...) asparagine). The chain crosses the membrane as a helical span at residues 224-244 (AIGAQGPASMMAYLVVSGLFL). At Lys260 the chain carries N6-acetyllysine. Residues 313-333 (MGFIDSIIAKYLATVVGYLVV) traverse the membrane as a helical segment. An N6-acetyllysine modification is found at Lys399. Positions 440–659 (IKFDHVPLAT…ITEDTVEFGS (220 aa)) constitute an ABC transporter domain. 473–480 (GPNGCGKS) provides a ligand contact to ATP. Lys533 is modified (N6-acetyllysine). Position 659 is a phosphoserine (Ser659).

This sequence belongs to the ABC transporter superfamily. ABCD family. Peroxisomal fatty acyl CoA transporter (TC 3.A.1.203) subfamily. As to quaternary structure, homodimers. Can form heterodimers with ABCD1 and ABCD2. Dimerization is necessary to form an active transporter. Interacts with PEX19; mediates the targeting of ABCD3 to peroxisomes. Ubiquitinated by PEX2 during pexophagy in response to starvation, leading to its degradation.

It localises to the peroxisome membrane. It carries out the reaction a very long-chain fatty acyl-CoA + H2O = a very long-chain fatty acid + CoA + H(+). The enzyme catalyses a very long-chain fatty acid(in) + ATP + H2O = a very long-chain fatty acid(out) + ADP + phosphate + H(+). The catalysed reaction is a long-chain fatty acyl-CoA + H2O = a long-chain fatty acid + CoA + H(+). It catalyses the reaction a long-chain fatty acid(in) + ATP + H2O = a long-chain fatty acid(out) + ADP + phosphate + H(+). It carries out the reaction pristanoyl-CoA + H2O = 2,6,10,14-tetramethylpentadecanoate + CoA + H(+). The enzyme catalyses 2,6,10,14-tetramethylpentadecanoate(in) + ATP + H2O = 2,6,10,14-tetramethylpentadecanoate(out) + ADP + phosphate + H(+). The catalysed reaction is hexadecanedioyl-CoA + H2O = hexadecanedioate + CoA + H(+). It catalyses the reaction hexadecanedioate(in) + ATP + H2O = hexadecanedioate(out) + ADP + phosphate + H(+). It carries out the reaction (5Z,8Z,11Z,14Z,17Z)-eicosapentaenoyl-CoA + H2O = (5Z,8Z,11Z,14Z,17Z)-eicosapentaenoate + CoA + H(+). The enzyme catalyses (5Z,8Z,11Z,14Z,17Z)-eicosapentaenoate(in) + ATP + H2O = (5Z,8Z,11Z,14Z,17Z)-eicosapentaenoate(out) + ADP + phosphate + H(+). The catalysed reaction is (4Z,7Z,10Z,13Z,16Z,19Z)-docosahexaenoyl-CoA + H2O = (4Z,7Z,10Z,13Z,16Z,19Z)-docosahexaenoate + CoA + H(+). It catalyses the reaction (4Z,7Z,10Z,13Z,16Z,19Z)-docosahexaenoate(in) + ATP + H2O = (4Z,7Z,10Z,13Z,16Z,19Z)-docosahexaenoate(out) + ADP + phosphate + H(+). Functionally, broad substrate specificity ATP-dependent transporter of the ATP-binding cassette (ABC) family that catalyzes the transport of long-chain fatty acids (LCFA)-CoA, dicarboxylic acids-CoA, long-branched-chain fatty acids-CoA and bile acids from the cytosol to the peroxisome lumen for beta-oxydation. Has fatty acyl-CoA thioesterase and ATPase activities. Probably hydrolyzes fatty acyl-CoAs into free fatty acids prior to their ATP-dependent transport into peroxisomes. Thus, play a role in regulation of LCFAs and energy metabolism namely, in the degradation and biosynthesis of fatty acids by beta-oxidation. The chain is ATP-binding cassette sub-family D member 3 from Homo sapiens (Human).